The primary structure comprises 107 residues: Thioredoxin 1 (107 aa).

The Thioredoxin domain occupies S2–L107. C32 and C35 form a disulfide bridge.

This sequence belongs to the thioredoxin family.

Participates in various redox reactions through the reversible oxidation of its active center dithiol to a disulfide and catalyzes dithiol-disulfide exchange reactions. This Nostoc sp. (strain PCC 7120 / SAG 25.82 / UTEX 2576) protein is Thioredoxin 1 (trxA).